The sequence spans 335 residues: Serpentine receptor class alpha-25 (335 aa).

Transmembrane regions (helical) follow at residues 22 to 42, 151 to 171, 195 to 215, 245 to 265, and 280 to 300; these read IPVK…FYFA, LLII…YGVP, FRTV…YLSV, CILI…VNYI, and LAPF…VIYF.

Belongs to the nematode receptor-like protein sra family.

The protein localises to the membrane. This chain is Serpentine receptor class alpha-25 (sra-25), found in Caenorhabditis elegans.